The primary structure comprises 242 residues: 1-(5-phosphoribosyl)-5-[(5-phosphoribosylamino)methylideneamino] imidazole-4-carboxamide isomerase (242 aa).

The active-site Proton acceptor is Asp-8. Asp-129 acts as the Proton donor in catalysis.

This sequence belongs to the HisA/HisF family.

The protein resides in the cytoplasm. It catalyses the reaction 1-(5-phospho-beta-D-ribosyl)-5-[(5-phospho-beta-D-ribosylamino)methylideneamino]imidazole-4-carboxamide = 5-[(5-phospho-1-deoxy-D-ribulos-1-ylimino)methylamino]-1-(5-phospho-beta-D-ribosyl)imidazole-4-carboxamide. It functions in the pathway amino-acid biosynthesis; L-histidine biosynthesis; L-histidine from 5-phospho-alpha-D-ribose 1-diphosphate: step 4/9. This chain is 1-(5-phosphoribosyl)-5-[(5-phosphoribosylamino)methylideneamino] imidazole-4-carboxamide isomerase, found in Beijerinckia indica subsp. indica (strain ATCC 9039 / DSM 1715 / NCIMB 8712).